The chain runs to 620 residues: Chaperone protein HscA homolog (620 aa).

Belongs to the heat shock protein 70 family.

Its function is as follows. Chaperone involved in the maturation of iron-sulfur cluster-containing proteins. Has a low intrinsic ATPase activity which is markedly stimulated by HscB. In Pseudomonas fluorescens (strain SBW25), this protein is Chaperone protein HscA homolog.